We begin with the raw amino-acid sequence, 278 residues long: Diaminopimelate epimerase (278 aa).

Substrate is bound by residues N11 and N63. The Proton donor role is filled by C72. Residues G73 to N74, N160, N193, and E211 to R212 each bind substrate. Catalysis depends on C220, which acts as the Proton acceptor. Substrate is bound at residue G221 to T222.

This sequence belongs to the diaminopimelate epimerase family. Homodimer.

The protein resides in the cytoplasm. It catalyses the reaction (2S,6S)-2,6-diaminopimelate = meso-2,6-diaminopimelate. It participates in amino-acid biosynthesis; L-lysine biosynthesis via DAP pathway; DL-2,6-diaminopimelate from LL-2,6-diaminopimelate: step 1/1. In terms of biological role, catalyzes the stereoinversion of LL-2,6-diaminopimelate (L,L-DAP) to meso-diaminopimelate (meso-DAP), a precursor of L-lysine and an essential component of the bacterial peptidoglycan. The protein is Diaminopimelate epimerase of Desulforudis audaxviator (strain MP104C).